Reading from the N-terminus, the 220-residue chain is Urease accessory protein UreF (220 aa).

This sequence belongs to the UreF family. In terms of assembly, ureD, UreF and UreG form a complex that acts as a GTP-hydrolysis-dependent molecular chaperone, activating the urease apoprotein by helping to assemble the nickel containing metallocenter of UreC. The UreE protein probably delivers the nickel.

The protein localises to the cytoplasm. Functionally, required for maturation of urease via the functional incorporation of the urease nickel metallocenter. This Bordetella parapertussis (strain 12822 / ATCC BAA-587 / NCTC 13253) protein is Urease accessory protein UreF.